The chain runs to 554 residues: MTKFVFVTGGVVSSLGKGIASASLAAILESRGLKVTLIKLDPYINVDPGTMSPFQHGEVFVTDDGAETDLDLGHYERFIETRMNRANNFTTGKIYQSVLEKERRGDYLGKTVQVIPHVTNEIQEFIQRGAGMGTPVAVDVAIVEIGGTVGDIESLPFLEAVRQMSLRMGANNSTFVHLTYLPWIATAGELKTKPTQHTVQKLREIGIQADALLCRADRRIPGEERAKISLFTNVPEWGVISMWDVDIIYKVPRMLHEQGLDGLICDKLRLNTRPTNLQRWDDLVYATEHPQGAVTVAMVGKYVDLSDSYKSVNEALRHAGMRNHVRVQIDHVDSETIDSADAAARLARYDAILVPGGFGQRGVEGKIATARYAREHKLPYLGICLGMQVATIEYARHVAGLANANSTEFDPATPHPVIALITEWQDADGSIQQRDQDSNLGGTMRLGAQSSDVLAGTLAHRIYGDVVTERHRHRYEANVNYLEPLRKAGLVIAALTQREQLTEIVELPQSMHPWFIGVQFHPEFKSTPWNGHPLFNSFIAAAKARHQARHEGPA.

Positions 1 to 270 (MTKFVFVTGG…DGLICDKLRL (270 aa)) are amidoligase domain. Ser13 provides a ligand contact to CTP. UTP is bound at residue Ser13. ATP contacts are provided by residues 14-19 (SLGKGI) and Asp71. Mg(2+)-binding residues include Asp71 and Glu144. CTP-binding positions include 151–153 (DIE), 191–196 (KTKPTQ), and Lys227. Residues 191–196 (KTKPTQ) and Lys227 each bind UTP. A Glutamine amidotransferase type-1 domain is found at 295-548 (TVAMVGKYVD…IAAAKARHQA (254 aa)). Gly357 is an L-glutamine binding site. Cys384 serves as the catalytic Nucleophile; for glutamine hydrolysis. Residues 385 to 388 (LGMQ), Glu408, and Arg474 contribute to the L-glutamine site. Catalysis depends on residues His521 and Glu523.

Belongs to the CTP synthase family. Homotetramer.

The enzyme catalyses UTP + L-glutamine + ATP + H2O = CTP + L-glutamate + ADP + phosphate + 2 H(+). It catalyses the reaction L-glutamine + H2O = L-glutamate + NH4(+). The catalysed reaction is UTP + NH4(+) + ATP = CTP + ADP + phosphate + 2 H(+). Its pathway is pyrimidine metabolism; CTP biosynthesis via de novo pathway; CTP from UDP: step 2/2. Allosterically activated by GTP, when glutamine is the substrate; GTP has no effect on the reaction when ammonia is the substrate. The allosteric effector GTP functions by stabilizing the protein conformation that binds the tetrahedral intermediate(s) formed during glutamine hydrolysis. Inhibited by the product CTP, via allosteric rather than competitive inhibition. Functionally, catalyzes the ATP-dependent amination of UTP to CTP with either L-glutamine or ammonia as the source of nitrogen. Regulates intracellular CTP levels through interactions with the four ribonucleotide triphosphates. This is CTP synthase from Verminephrobacter eiseniae (strain EF01-2).